Consider the following 356-residue polypeptide: DNA polymerase IV (356 aa).

Positions 6–187 (IIHIDMDYFF…LDIGDFPGVG (182 aa)) constitute a UmuC domain. Asp-10 and Asp-105 together coordinate Mg(2+). Residue Glu-106 is part of the active site.

The protein belongs to the DNA polymerase type-Y family. As to quaternary structure, monomer. Mg(2+) is required as a cofactor.

Its subcellular location is the cytoplasm. The enzyme catalyses DNA(n) + a 2'-deoxyribonucleoside 5'-triphosphate = DNA(n+1) + diphosphate. Functionally, poorly processive, error-prone DNA polymerase involved in untargeted mutagenesis. Copies undamaged DNA at stalled replication forks, which arise in vivo from mismatched or misaligned primer ends. These misaligned primers can be extended by PolIV. Exhibits no 3'-5' exonuclease (proofreading) activity. May be involved in translesional synthesis, in conjunction with the beta clamp from PolIII. This is DNA polymerase IV from Staphylococcus aureus (strain Mu50 / ATCC 700699).